The following is a 192-amino-acid chain: Ribosome maturation factor RimP (192 aa).

Belongs to the RimP family.

It is found in the cytoplasm. Functionally, required for maturation of 30S ribosomal subunits. The protein is Ribosome maturation factor RimP of Mycobacterium sp. (strain JLS).